The sequence spans 104 residues: Large ribosomal subunit protein uL24 (104 aa).

Belongs to the universal ribosomal protein uL24 family. In terms of assembly, part of the 50S ribosomal subunit.

Functionally, one of two assembly initiator proteins, it binds directly to the 5'-end of the 23S rRNA, where it nucleates assembly of the 50S subunit. In terms of biological role, one of the proteins that surrounds the polypeptide exit tunnel on the outside of the subunit. This Clostridium beijerinckii (strain ATCC 51743 / NCIMB 8052) (Clostridium acetobutylicum) protein is Large ribosomal subunit protein uL24.